A 249-amino-acid polypeptide reads, in one-letter code: Metallo-beta-lactamase type 2 (249 aa).

Positions 1-22 (MMKKMKWALVLALGLTGLNAFG) are cleaved as a signal peptide. The Zn(2+) site is built by His98, His100, Asp102, His161, and Cys180. Lys183 serves as a coordination point for substrate. His222 contributes to the Zn(2+) binding site.

Belongs to the metallo-beta-lactamase superfamily. Class-B beta-lactamase family. As to quaternary structure, monomer. It depends on Zn(2+) as a cofactor.

It is found in the periplasm. It carries out the reaction a beta-lactam + H2O = a substituted beta-amino acid. Confers resistance to the different beta-lactams antibiotics (penicillin, cephalosporin and carbapenem) via the hydrolysis of the beta-lactam ring. The protein is Metallo-beta-lactamase type 2 (blaB4) of Elizabethkingia meningoseptica (Chryseobacterium meningosepticum).